The primary structure comprises 543 residues: Chaperonin GroEL (543 aa).

ATP-binding positions include 30–33, Lys51, 87–91, Gly415, 480–482, and Asp496; these read TLGP, DGTTT, and NAL.

The protein belongs to the chaperonin (HSP60) family. Forms a cylinder of 14 subunits composed of two heptameric rings stacked back-to-back. Interacts with the co-chaperonin GroES.

Its subcellular location is the cytoplasm. The enzyme catalyses ATP + H2O + a folded polypeptide = ADP + phosphate + an unfolded polypeptide.. Its function is as follows. Together with its co-chaperonin GroES, plays an essential role in assisting protein folding. The GroEL-GroES system forms a nano-cage that allows encapsulation of the non-native substrate proteins and provides a physical environment optimized to promote and accelerate protein folding. This chain is Chaperonin GroEL, found in Gemmatimonas aurantiaca (strain DSM 14586 / JCM 11422 / NBRC 100505 / T-27).